The sequence spans 325 residues: tRNA N6-adenosine threonylcarbamoyltransferase (325 aa).

3 residues coordinate Fe cation: H107, H111, and Y127. Substrate-binding positions include 127–131 (YVSGG), D159, G172, E176, and N257. D285 provides a ligand contact to Fe cation.

The protein belongs to the KAE1 / TsaD family. In terms of assembly, monomer. Component of the KEOPS complex that consists of Kae1, Bud32, Cgi121 and Pcc1; the whole complex dimerizes. The cofactor is Fe(2+).

It is found in the cytoplasm. It carries out the reaction L-threonylcarbamoyladenylate + adenosine(37) in tRNA = N(6)-L-threonylcarbamoyladenosine(37) in tRNA + AMP + H(+). Its function is as follows. Required for the formation of a threonylcarbamoyl group on adenosine at position 37 (t(6)A37) in tRNAs that read codons beginning with adenine. Is a component of the KEOPS complex that is probably involved in the transfer of the threonylcarbamoyl moiety of threonylcarbamoyl-AMP (TC-AMP) to the N6 group of A37. Kae1 likely plays a direct catalytic role in this reaction, but requires other protein(s) of the complex to fulfill this activity. This is tRNA N6-adenosine threonylcarbamoyltransferase from Thermococcus kodakarensis (strain ATCC BAA-918 / JCM 12380 / KOD1) (Pyrococcus kodakaraensis (strain KOD1)).